A 552-amino-acid chain; its full sequence is Membrane protein insertase YidC (552 aa).

A helical transmembrane segment spans residues isoleucine 3–tryptophan 23. A disordered region spans residues proline 35–aspartate 59. Residues threonine 42–aspartate 59 are compositionally biased toward low complexity. 3 consecutive transmembrane segments (helical) span residues tryptophan 364–alanine 384, phenylalanine 430–leucine 450, and methionine 504–leucine 524.

Belongs to the OXA1/ALB3/YidC family. Type 1 subfamily. As to quaternary structure, interacts with the Sec translocase complex via SecD. Specifically interacts with transmembrane segments of nascent integral membrane proteins during membrane integration.

It localises to the cell inner membrane. Functionally, required for the insertion and/or proper folding and/or complex formation of integral membrane proteins into the membrane. Involved in integration of membrane proteins that insert both dependently and independently of the Sec translocase complex, as well as at least some lipoproteins. Aids folding of multispanning membrane proteins. This is Membrane protein insertase YidC from Paraburkholderia phytofirmans (strain DSM 17436 / LMG 22146 / PsJN) (Burkholderia phytofirmans).